The following is a 1025-amino-acid chain: Adenylate-forming reductase 03009 (1025 aa).

The tract at residues phenylalanine 38 to isoleucine 422 is adenylation (A) domain. Residues valine 332–threonine 333 and histidine 412–arginine 415 contribute to the AMP site. The tract at residues serine 556 to lysine 638 is thiolation and peptide carrier (T) domain. The interval phenylalanine 682–valine 900 is thioester reductase (TR) domain. Residues arginine 685–alanine 688, serine 769–leucine 771, and tyrosine 840 each bind NADP(+).

This sequence belongs to the adenylate-forming reductase family.

Functionally, adenylate-forming reductase, a natural product biosynthesis enzyme that resembles non-ribosomal peptide synthetases, yet serves to modify one substrate, rather than to condense two or more building blocks. The A-domain preferentially accepts L-serine, L-alanine and L-valine as substrates. The natural product of the enzyme is not yet known. The polypeptide is Adenylate-forming reductase 03009 (Coprinopsis cinerea (strain Okayama-7 / 130 / ATCC MYA-4618 / FGSC 9003) (Inky cap fungus)).